The chain runs to 300 residues: NAD kinase (300 aa).

The active-site Proton acceptor is aspartate 77. NAD(+) is bound by residues aspartate 77–glycine 78, asparagine 151–aspartate 152, histidine 162, arginine 179, aspartate 181, and threonine 192–serine 197.

It belongs to the NAD kinase family. A divalent metal cation serves as cofactor.

It localises to the cytoplasm. It catalyses the reaction NAD(+) + ATP = ADP + NADP(+) + H(+). Functionally, involved in the regulation of the intracellular balance of NAD and NADP, and is a key enzyme in the biosynthesis of NADP. Catalyzes specifically the phosphorylation on 2'-hydroxyl of the adenosine moiety of NAD to yield NADP. The chain is NAD kinase from Cellvibrio japonicus (strain Ueda107) (Pseudomonas fluorescens subsp. cellulosa).